The following is a 111-amino-acid chain: Cytochrome c (111 aa).

Position 1 is an N-acetylserine (Ser-1). Positions 22, 25, and 26 each coordinate heme c. Lys-80 bears the N6,N6,N6-trimethyllysine mark. Met-88 provides a ligand contact to heme c.

Belongs to the cytochrome c family. Post-translationally, binds 1 heme c group covalently per subunit.

The protein localises to the mitochondrion intermembrane space. Functionally, electron carrier protein. The oxidized form of the cytochrome c heme group can accept an electron from the heme group of the cytochrome c1 subunit of cytochrome reductase. Cytochrome c then transfers this electron to the cytochrome oxidase complex, the final protein carrier in the mitochondrial electron-transport chain. The chain is Cytochrome c from Ulva intestinalis (Hollow green nori).